Here is a 313-residue protein sequence, read N- to C-terminus: Arabinooligosaccharides transport system permease protein AraP (313 aa).

6 helical membrane-spanning segments follow: residues 39–59, 91–111, 126–146, 176–196, 224–244, and 281–301; these read FVLS…IMSF, LEYT…LAIF, ALFI…RLIF, MFLM…LYFL, ITLP…IIGG, and MGYG…VSLI. Residues 87–302 enclose the ABC transmembrane type-1 domain; it reads LWNTLEYTFW…IVILVVSLIS (216 aa).

Belongs to the binding-protein-dependent transport system permease family. MalFG subfamily. As to quaternary structure, the complex is composed of two ATP-binding proteins (MsmX), two transmembrane proteins (AraP and AraQ) and a solute-binding protein (AraN).

It localises to the cell membrane. Functionally, part of the ABC transporter complex AraNPQ involved in the uptake of arabinooligosaccharides. Transports alpha-1,5-arabinooligosaccharides, at least up to four L-arabinosyl units. Responsible for the translocation of the substrate across the membrane. This is Arabinooligosaccharides transport system permease protein AraP from Bacillus subtilis (strain 168).